A 40-amino-acid chain; its full sequence is QQQQCRQGQQTHQRQRVCQARRPAIQRCCQQLRNIQVQCR.

N-glycosylated.

In terms of biological role, chitin-binding protein. Has antifungal activity against C.krusei, C.albicans, C.tropicalis and C.parapsilosis. Has antinociceptive and anti-inflammatory activity in mice. The polypeptide is Chitin-binding protein 4 (Moringa oleifera (Horseradish tree)).